The following is a 320-amino-acid chain: tRNA pseudouridine synthase B (320 aa).

Residue D41 is the Nucleophile of the active site. Disordered regions lie at residues 116-136 (PPQV…ARRG) and 259-284 (DQCQ…DPSA). A compositionally biased stretch (basic and acidic residues) spans 125–136 (QGERAHARARRG). The span at 270–284 (SDQQESAPNQTDPSA) shows a compositional bias: polar residues.

The protein belongs to the pseudouridine synthase TruB family. Type 1 subfamily.

The catalysed reaction is uridine(55) in tRNA = pseudouridine(55) in tRNA. Its function is as follows. Responsible for synthesis of pseudouridine from uracil-55 in the psi GC loop of transfer RNAs. The sequence is that of tRNA pseudouridine synthase B from Prochlorococcus marinus (strain MIT 9313).